Here is a 135-residue protein sequence, read N- to C-terminus: MFGTKALRAAQHAVRTPSIKFIGKRTIPAVVDHTPQPHPASPTKTLPASFLSSHATFSVYRDHAQQFGPLRKTITPNAGIGGSPAVALGPVEPPQGVYFDRNDLPERFRRQPLTPDEIEAIETGGGHLLYRGSYL.

It belongs to the alpha-ketoglutarate dehydrogenase component 4 family. In terms of assembly, component of the 2-oxoglutarate dehydrogenase complex (OGDC), also called alpha-ketoglutarate dehydrogenase (KGDH) complex. The copmplex is composed of the catalytic subunits OGDH (2-oxoglutarate dehydrogenase; also called E1 subunit), DLST (dihydrolipoamide succinyltransferase; also called E2 subunit) and DLD (dihydrolipoamide dehydrogenase; also called E3 subunit), and the assembly factor KGD4. Within OGDC, interacts (via N-terminus) with E3 subunit and (via C-terminus) with the complex core formed by E1 and E2 subunits.

Its subcellular location is the mitochondrion. Molecular adapter that is necessary to a form a stable 2-oxoglutarate dehydrogenase enzyme complex (OGDC). Required for incorporation of the E3 subunit into the E1-E2 core of mitochondrial OGDC, and acting as a stability factor for the fully assembled complex. In Chaetomium thermophilum (strain DSM 1495 / CBS 144.50 / IMI 039719) (Thermochaetoides thermophila), this protein is Alpha-ketoglutarate dehydrogenase subunit 4, mitochondrial (KGD4).